Consider the following 748-residue polypeptide: Catalase-peroxidase (748 aa).

Residues 1-16 (MSSDTSASRPPQPDTR) are compositionally biased toward polar residues. The disordered stretch occupies residues 1–43 (MSSDTSASRPPQPDTRTASKSESENPAIPSPHPKSNAPLTNRD). A cross-link (tryptophyl-tyrosyl-methioninium (Trp-Tyr) (with M-264)) is located at residues 113–238 (WHAAGTYRIH…YGATTMGLIY (126 aa)). The Proton acceptor role is filled by His-114. Residues 238-264 (YVNPEGPEGKPDPIAAAIDIRETFGRM) constitute a cross-link (tryptophyl-tyrosyl-methioninium (Tyr-Met) (with W-113)). Residue His-279 coordinates heme b.

This sequence belongs to the peroxidase family. Peroxidase/catalase subfamily. In terms of assembly, homodimer or homotetramer. Heme b serves as cofactor. In terms of processing, formation of the three residue Trp-Tyr-Met cross-link is important for the catalase, but not the peroxidase activity of the enzyme.

The enzyme catalyses H2O2 + AH2 = A + 2 H2O. The catalysed reaction is 2 H2O2 = O2 + 2 H2O. Bifunctional enzyme with both catalase and broad-spectrum peroxidase activity. The protein is Catalase-peroxidase of Mycolicibacterium paratuberculosis (strain ATCC BAA-968 / K-10) (Mycobacterium paratuberculosis).